The chain runs to 215 residues: Thiamine-phosphate synthase (215 aa).

4-amino-2-methyl-5-(diphosphooxymethyl)pyrimidine is bound by residues 37–41 and Asn-69; that span reads QLRIK. The Mg(2+) site is built by Asp-70 and Asp-89. A 4-amino-2-methyl-5-(diphosphooxymethyl)pyrimidine-binding site is contributed by Ser-108. 134–136 is a 2-[(2R,5Z)-2-carboxy-4-methylthiazol-5(2H)-ylidene]ethyl phosphate binding site; it reads TQT. Lys-137 is a 4-amino-2-methyl-5-(diphosphooxymethyl)pyrimidine binding site. 2-[(2R,5Z)-2-carboxy-4-methylthiazol-5(2H)-ylidene]ethyl phosphate-binding positions include Gly-166 and 186–187; that span reads VS.

It belongs to the thiamine-phosphate synthase family. The cofactor is Mg(2+).

The enzyme catalyses 2-[(2R,5Z)-2-carboxy-4-methylthiazol-5(2H)-ylidene]ethyl phosphate + 4-amino-2-methyl-5-(diphosphooxymethyl)pyrimidine + 2 H(+) = thiamine phosphate + CO2 + diphosphate. It carries out the reaction 2-(2-carboxy-4-methylthiazol-5-yl)ethyl phosphate + 4-amino-2-methyl-5-(diphosphooxymethyl)pyrimidine + 2 H(+) = thiamine phosphate + CO2 + diphosphate. It catalyses the reaction 4-methyl-5-(2-phosphooxyethyl)-thiazole + 4-amino-2-methyl-5-(diphosphooxymethyl)pyrimidine + H(+) = thiamine phosphate + diphosphate. The protein operates within cofactor biosynthesis; thiamine diphosphate biosynthesis; thiamine phosphate from 4-amino-2-methyl-5-diphosphomethylpyrimidine and 4-methyl-5-(2-phosphoethyl)-thiazole: step 1/1. Condenses 4-methyl-5-(beta-hydroxyethyl)thiazole monophosphate (THZ-P) and 2-methyl-4-amino-5-hydroxymethyl pyrimidine pyrophosphate (HMP-PP) to form thiamine monophosphate (TMP). This is Thiamine-phosphate synthase from Yersinia pseudotuberculosis serotype I (strain IP32953).